A 464-amino-acid chain; its full sequence is Type I restriction enzyme EcoKI specificity subunit (464 aa).

It belongs to the type-I restriction system S methylase family. The type I restriction/modification system is composed of three polypeptides R, M and S. The restriction enzyme has stoichiometry R(2)M(2)S(1). The methyltransferase is composed of M(2)S(1). As to quaternary structure, (Microbial infection) Interacts with Escherichia phage T7 protein Ocr; this interaction leads to the inhibition of the methyltransferase restriction enzyme M.EcoKI composed of M(2)S(1).

Functionally, the specificity (S) subunit of a type I restriction enzyme; this subunit dictates DNA sequence specificity. The M and S subunits together form a methyltransferase (MTase) that methylates A-2 on the top and A-3 on the bottom strand of the sequence 5'-AACN(6)GTGC-3'. In the presence of the R subunit the complex can also act as an endonuclease, binding to the same target sequence but cutting the DNA some distance from this site. Whether the DNA is cut or modified depends on the methylation state of the target sequence. When the target site is unmodified, the DNA is cut. When the target site is hemimethylated, the complex acts as a maintenance MTase modifying the DNA so that both strands become methylated. After locating a non-methylated recognition site, the enzyme complex serves as a molecular motor that translocates DNA in an ATP-dependent manner until a collision occurs that triggers cleavage. In Escherichia coli (strain K12), this protein is Type I restriction enzyme EcoKI specificity subunit.